The chain runs to 235 residues: MAELVVALDFPAADVAVDMAGRLRGTAPWMKVGLELFCAAGPDVVRAVADLGFRVFLDLKFHDIPNTVRGAVRSAVRSGADMVNIHLMGGERMARAAVEGLHEGAQTTGSVPLLFGVTVLTSTAQGELPGISTDIGEYAASLAASGAAWGLNGVVCSGYEVESIKKRCGASFLCLTPGIRPGGGAGGDDQRRVMTPAQAVSAGSDYLVVGRPVTGAADPAAAARAIMAEMAAVRR.

Residues aspartate 9, lysine 31, 58–67, threonine 121, arginine 180, glutamine 190, glycine 210, and arginine 211 each bind substrate; that span reads DLKFHDIPNT. The Proton donor role is filled by lysine 60.

It belongs to the OMP decarboxylase family. Type 1 subfamily. Homodimer.

The enzyme catalyses orotidine 5'-phosphate + H(+) = UMP + CO2. Its pathway is pyrimidine metabolism; UMP biosynthesis via de novo pathway; UMP from orotate: step 2/2. Its function is as follows. Catalyzes the decarboxylation of orotidine 5'-monophosphate (OMP) to uridine 5'-monophosphate (UMP). In Nitratidesulfovibrio vulgaris (strain ATCC 29579 / DSM 644 / CCUG 34227 / NCIMB 8303 / VKM B-1760 / Hildenborough) (Desulfovibrio vulgaris), this protein is Orotidine 5'-phosphate decarboxylase.